Consider the following 403-residue polypeptide: Tyrosine--tRNA ligase (403 aa).

A 'HIGH' region motif is present at residues 42–51 (PTAPDLHLGH). The short motif at 226–230 (KMSKS) is the 'KMSKS' region element. An ATP-binding site is contributed by lysine 229. Residues 339–400 (LRIASLLTAA…GKRNFARVSL (62 aa)) enclose the S4 RNA-binding domain.

It belongs to the class-I aminoacyl-tRNA synthetase family. TyrS type 2 subfamily. Homodimer.

It is found in the cytoplasm. It catalyses the reaction tRNA(Tyr) + L-tyrosine + ATP = L-tyrosyl-tRNA(Tyr) + AMP + diphosphate + H(+). Catalyzes the attachment of tyrosine to tRNA(Tyr) in a two-step reaction: tyrosine is first activated by ATP to form Tyr-AMP and then transferred to the acceptor end of tRNA(Tyr). This is Tyrosine--tRNA ligase from Xanthomonas oryzae pv. oryzae (strain MAFF 311018).